The sequence spans 365 residues: MFELNPIRTQLADLTERTQLIRGYLDFDTKVERLEEVNAELEQPEIWNTPEKAQTLGKERSTLEMVVNTINALIQGIEDVEALIELAVEAEDEQTLYEAQIEADELATKLAKLEFQRMFSGPYDATDCYLDLQAGSGGTEAQDWTEMLLRMYLRWAESKGFKTELIEVSDGDVAGLKSATIRITGEYAFGWLRTETGIHRLVRKSPFDSNNRRHTSFAAAFVYPEVDDDVDIEINPADLRIDVYRASGAGGQHVNKTESAVRITHMPSGIVVQCQNGRSQHQNKDQCMKQLRAKLYEMEMMKKNAEKQAMEENKSDIGWGSQIRSYVLDDSRIKDLRTGVENRNTQAVLDGDLDRFIEASLKAGL.

At glutamine 252 the chain carries N5-methylglutamine.

This sequence belongs to the prokaryotic/mitochondrial release factor family. Methylated by PrmC. Methylation increases the termination efficiency of RF2.

The protein resides in the cytoplasm. In terms of biological role, peptide chain release factor 2 directs the termination of translation in response to the peptide chain termination codons UGA and UAA. In Haemophilus ducreyi (strain 35000HP / ATCC 700724), this protein is Peptide chain release factor 2.